The chain runs to 224 residues: Putative adhesin A1G_07050 (224 aa).

Residues 1-22 (MKKLLLIAATSATILSSSVSFA) form the signal peptide.

In Rickettsia rickettsii (strain Sheila Smith), this protein is Putative adhesin A1G_07050.